A 65-amino-acid polypeptide reads, in one-letter code: Large ribosomal subunit protein bL35 (65 aa).

Belongs to the bacterial ribosomal protein bL35 family.

This Synechococcus sp. (strain CC9605) protein is Large ribosomal subunit protein bL35.